Reading from the N-terminus, the 277-residue chain is Pantothenate synthetase (277 aa).

26 to 33 (MGYLHQGH) contributes to the ATP binding site. The active-site Proton donor is His33. A (R)-pantoate-binding site is contributed by Gln57. Residue Gln57 participates in beta-alanine binding. Position 143–146 (143–146 (GQKD)) interacts with ATP. Gln149 is a (R)-pantoate binding site. ATP is bound by residues Val172 and 180–183 (LSSR).

The protein belongs to the pantothenate synthetase family. As to quaternary structure, homodimer.

It localises to the cytoplasm. The catalysed reaction is (R)-pantoate + beta-alanine + ATP = (R)-pantothenate + AMP + diphosphate + H(+). It participates in cofactor biosynthesis; (R)-pantothenate biosynthesis; (R)-pantothenate from (R)-pantoate and beta-alanine: step 1/1. Catalyzes the condensation of pantoate with beta-alanine in an ATP-dependent reaction via a pantoyl-adenylate intermediate. The chain is Pantothenate synthetase from Chloroflexus aggregans (strain MD-66 / DSM 9485).